The following is a 65-amino-acid chain: Large ribosomal subunit protein bL35 (65 aa).

The tract at residues 1-22 (MPKIKTVRGAAKRFKKTGKGGF) is disordered. Positions 10-22 (AAKRFKKTGKGGF) are enriched in basic residues.

The protein belongs to the bacterial ribosomal protein bL35 family.

In Escherichia coli O127:H6 (strain E2348/69 / EPEC), this protein is Large ribosomal subunit protein bL35.